The following is a 312-amino-acid chain: MVKRKHLLGLQELSKEEINTILDIARPMRDIIMRDIKKVPTLRGKTVATLFYEPSTRTRSSFELAAKFLSADTLSINVSSSSVQKGESLIDTIRTLEAMGVEIIAVRHQQSGVPKFISLNTKMSVINAGDGFHEHPTQALLDLFTIKQKLYKIEGLKVAIIGDIYHSRVARSNIWGLLKLGAEVTVCGPPSLIPVEIEKLGVRVEINLQRTLEWADVVNVLRIQKERQDAGYLTTLDEYRDWYGLTQEKLEKLKGKKLLILHPGPLNRGVEIDDYVADSPNAVVNEQVTNGVAVRMAVLYLLAGGNESGNVD.

Carbamoyl phosphate-binding residues include arginine 57 and threonine 58. Lysine 85 serves as a coordination point for L-aspartate. 3 residues coordinate carbamoyl phosphate: arginine 107, histidine 135, and glutamine 138. Residues arginine 168 and arginine 222 each contribute to the L-aspartate site. The carbamoyl phosphate site is built by glycine 264 and proline 265.

This sequence belongs to the aspartate/ornithine carbamoyltransferase superfamily. ATCase family. Heterododecamer (2C3:3R2) of six catalytic PyrB chains organized as two trimers (C3), and six regulatory PyrI chains organized as three dimers (R2).

It catalyses the reaction carbamoyl phosphate + L-aspartate = N-carbamoyl-L-aspartate + phosphate + H(+). It functions in the pathway pyrimidine metabolism; UMP biosynthesis via de novo pathway; (S)-dihydroorotate from bicarbonate: step 2/3. Functionally, catalyzes the condensation of carbamoyl phosphate and aspartate to form carbamoyl aspartate and inorganic phosphate, the committed step in the de novo pyrimidine nucleotide biosynthesis pathway. This chain is Aspartate carbamoyltransferase catalytic subunit, found in Carboxydothermus hydrogenoformans (strain ATCC BAA-161 / DSM 6008 / Z-2901).